Here is a 133-residue protein sequence, read N- to C-terminus: ATP synthase epsilon chain, chloroplastic (133 aa).

Belongs to the ATPase epsilon chain family. F-type ATPases have 2 components, CF(1) - the catalytic core - and CF(0) - the membrane proton channel. CF(1) has five subunits: alpha(3), beta(3), gamma(1), delta(1), epsilon(1). CF(0) has three main subunits: a, b and c.

Its subcellular location is the plastid. It is found in the chloroplast thylakoid membrane. In terms of biological role, produces ATP from ADP in the presence of a proton gradient across the membrane. The polypeptide is ATP synthase epsilon chain, chloroplastic (Citrus sinensis (Sweet orange)).